A 375-amino-acid polypeptide reads, in one-letter code: Chlorophyll a/b light-harvesting protein PcbC (375 aa).

6 consecutive transmembrane segments (helical) span residues 40-60, 102-122, 151-171, 225-245, 262-282, and 300-320; these read LLGA…SITV, YFVI…GGLF, LSLI…AFVA, IIGG…WHIL, AILS…GFFV, and GAAA…VWHA. A disordered region spans residues 352-375; sequence ARTFIGRGKPQPEPPKKKGLFGRG.

It belongs to the PsbB/PsbC family. IsiA/Pcb subfamily. As to quaternary structure, the antenna complex consists of chlorophylls (a and b) and chlorophyll a/b binding proteins. The cofactor is chlorophyll a. Requires chlorophyll b as cofactor.

It is found in the cellular thylakoid membrane. Functionally, the antenna complex functions as a light receptor, it captures and delivers excitation energy to photosystems II and I. The Prochlorales pcb genes are not related to higher plant LHCs. The sequence is that of Chlorophyll a/b light-harvesting protein PcbC (pcbC) from Prochlorothrix hollandica.